The following is a 152-amino-acid chain: uncharacterized protein (152 aa).

4 helical membrane-spanning segments follow: residues 2–22 (ENLIVAISNFPAVLPIGLSFL), 26–46 (FITFGTITFVSIASFISHLIE), 92–112 (VVPIVNNKWLFAMTIPVFILL), and 128–148 (YIITHCMWHAGIFGLMYYFLK).

Its subcellular location is the membrane. This is an uncharacterized protein from Acanthamoeba polyphaga mimivirus (APMV).